We begin with the raw amino-acid sequence, 54 residues long: uncharacterized protein (54 aa).

The disordered stretch occupies residues 34–54; it reads NNREKQKSGKLRELRRGFKTF.

This is an uncharacterized protein from Acidianus two-tailed virus (ATV).